The following is a 340-amino-acid chain: Phenylalanine--tRNA ligase alpha subunit (340 aa).

Position 254 (Glu-254) interacts with Mg(2+).

This sequence belongs to the class-II aminoacyl-tRNA synthetase family. Phe-tRNA synthetase alpha subunit type 1 subfamily. As to quaternary structure, tetramer of two alpha and two beta subunits. The cofactor is Mg(2+).

It localises to the cytoplasm. It catalyses the reaction tRNA(Phe) + L-phenylalanine + ATP = L-phenylalanyl-tRNA(Phe) + AMP + diphosphate + H(+). The sequence is that of Phenylalanine--tRNA ligase alpha subunit from Chloroherpeton thalassium (strain ATCC 35110 / GB-78).